The sequence spans 608 residues: Protein UL27 (608 aa).

The segment covering 1 to 13 has biased composition (pro residues); it reads MNPVDQPPPPPLT. The disordered stretch occupies residues 1 to 33; sequence MNPVDQPPPPPLTQQPEEQAKEDHDDGDERLFR. The segment covering 18–33 has biased composition (basic and acidic residues); sequence EQAKEDHDDGDERLFR.

The protein belongs to the herpesviridae U4 family. In terms of assembly, interacts with host KAT5, PSME3 and EP400.

The protein localises to the host nucleus. It localises to the host nucleolus. Its function is as follows. Promotes a cell cycle arrest in G0/G1 by inducing the proteasomal degradation of host histone acetyltransferase KAT5/Tip60. The polypeptide is Protein UL27 (UL27) (Homo sapiens (Human)).